Consider the following 388-residue polypeptide: Cdc42 effector protein 1 (388 aa).

Residues 1-28 are disordered; it reads MPGPQGGTGAPSMSLGKLSPVGWVPSSH. Residues S19 and S27 each carry the phosphoserine modification. Position 34 is a phosphothreonine (T34). A CRIB domain is found at 38–52; the sequence is ISPPLGDFRHTMHVG. Phosphoserine is present on S39. At R53 the chain carries Omega-N-methylarginine. A phosphoserine mark is found at S65, S77, S101, S113, S121, and S139. The segment at 165–206 is disordered; the sequence is RLPRVEKHSSRDRDHDRDPDHSQDREQSSSPSEPNPNPELRR. A compositionally biased stretch (basic and acidic residues) spans 167 to 191; it reads PRVEKHSSRDRDHDRDPDHSQDREQ. A phosphoserine mark is found at S193, S207, S209, and S212. 2 repeat units span residues 237 to 243 and 250 to 256. The disordered stretch occupies residues 237-257; that stretch reads PAANPPAPAANPAPTAKPPAD. Positions 237 to 270 are 2 X 7 AA tandem repeats of [PT]-[AT]-A-[ENT]-[PT]-[PTS]-[AG]; sequence PAANPPAPAANPAPTAKPPADAVTTLDTVTSLPA. Residues 239 to 253 are compositionally biased toward pro residues; it reads ANPPAPAANPAPTAK. 4 positions are modified to phosphoserine: S298, S318, S347, and S350.

It belongs to the BORG/CEP family. In terms of assembly, interacts with RHOQ and CDC42, in a GTP-dependent manner.

The protein resides in the endomembrane system. The protein localises to the cytoplasm. It localises to the cytoskeleton. Probably involved in the organization of the actin cytoskeleton. Induced membrane extensions in fibroblasts. The protein is Cdc42 effector protein 1 of Rattus norvegicus (Rat).